The chain runs to 551 residues: Membrane protein insertase YidC (551 aa).

The chain crosses the membrane as a helical span at residues 6 to 26; sequence YFLWGALFISGYLLFLQWSQD. A compositionally biased stretch (low complexity) spans 34–50; that stretch reads SVAQSTQSQSETNSQMS. The segment at 34-68 is disordered; that stretch reads SVAQSTQSQSETNSQMSDDLPMATQSTTEANAEIP. Residues 56-68 show a composition bias toward polar residues; that stretch reads ATQSTTEANAEIP. 5 helical membrane passes run 340-360, 363-383, 433-453, 464-484, and 509-529; these read TVDYGWLWWLAKPLFWLLTLI, FVINWGIAIILIVVCVKAIFF, LGGCLPILVQMPVFLSLYWVL, FFLWIHDLSVMDPYFILPILM, and IMPVAFSIFFLWFPAGLVLYW.

The protein belongs to the OXA1/ALB3/YidC family. Type 1 subfamily. In terms of assembly, interacts with the Sec translocase complex via SecD. Specifically interacts with transmembrane segments of nascent integral membrane proteins during membrane integration.

Its subcellular location is the cell inner membrane. Required for the insertion and/or proper folding and/or complex formation of integral membrane proteins into the membrane. Involved in integration of membrane proteins that insert both dependently and independently of the Sec translocase complex, as well as at least some lipoproteins. Aids folding of multispanning membrane proteins. This Marinomonas sp. (strain MWYL1) protein is Membrane protein insertase YidC.